The chain runs to 889 residues: MNKITPMMQQYLEIKEKYPDALLLYRMGDFYEMFMDDAVTASGLLEIALTSRDRQSEVRIPMCGVPYHAAEGYIARLVSAGKKVAICDQVEDPRKAKGLVRREVTRVITPGLVLDAQNLAAKQPNYLAAVSNSTAGERFGLAFLDVSTAEFKMVEIESREALLEELIRVSPRELLLSDDDEHPWAEELPKLYGIALTPLGADRFDGKRAEEALVGHFRVHSLEGFGISGMDLGIRAAGAILAYMQANLLGSCDHITRLLPYSRGDFMIVDEAGVRNLEIFHSQSFQGRKGSLIDILDETKTAMGGRKLQQWLRYPLLDLARINNRREAIAELAANAPMRGETLGLLSRISDVERLNGRNSTGTSTPRDLVALKKSLQNLPALGAALAELTSPRLSELRARWDDLADVADIIERTLLDPPPPGLAAGGVISAGVSEELDHFVRLSRDAKGWMADYEVQQRRDTGISSLKVRYNKVFGYYIEISNANLNSVPEHYFRKQTLVNAERFITEELKTFETQVLQAEEKRLELEQQIFADLRARIAREAGRIQAAADRIADLDCVSALAEVACRYDYCRPVMDESDAIRIRDGRHPVIEHYLKDGTFVPNDLDMDQRDQQVLVITGPNMAGKSTILRQAALIVLMGHIGSFVPASEAHIGLVDRIFTRVGASDDLARGRSTFMVEMQETANILHHATPRSLIILDEIGRGTSTYDGLSIAWAVAEHLHDFQEKGIKTLFATHYHELTELARSRPRVRNFNVAIREWQQEILFFHKLVQGGASRSYGIQVARLAGLPEEVTGRAREILQQLESGHAPFAAAPSGAARRGRPAREKEPGIQMSLFQRSPEWLRDRILALDLDNMTPIAALQNLHALKEQIRGSAGEEPASCASRGKR.

620 to 627 (GPNMAGKS) contacts ATP. The disordered stretch occupies residues 812–831 (AAAPSGAARRGRPAREKEPG).

It belongs to the DNA mismatch repair MutS family.

Functionally, this protein is involved in the repair of mismatches in DNA. It is possible that it carries out the mismatch recognition step. This protein has a weak ATPase activity. This is DNA mismatch repair protein MutS from Syntrophobacter fumaroxidans (strain DSM 10017 / MPOB).